The sequence spans 244 residues: 1-(5-phosphoribosyl)-5-[(5-phosphoribosylamino)methylideneamino] imidazole-4-carboxamide isomerase (244 aa).

Catalysis depends on aspartate 10, which acts as the Proton acceptor. Aspartate 132 (proton donor) is an active-site residue.

It belongs to the HisA/HisF family.

The protein resides in the cytoplasm. It carries out the reaction 1-(5-phospho-beta-D-ribosyl)-5-[(5-phospho-beta-D-ribosylamino)methylideneamino]imidazole-4-carboxamide = 5-[(5-phospho-1-deoxy-D-ribulos-1-ylimino)methylamino]-1-(5-phospho-beta-D-ribosyl)imidazole-4-carboxamide. Its pathway is amino-acid biosynthesis; L-histidine biosynthesis; L-histidine from 5-phospho-alpha-D-ribose 1-diphosphate: step 4/9. The protein is 1-(5-phosphoribosyl)-5-[(5-phosphoribosylamino)methylideneamino] imidazole-4-carboxamide isomerase of Xanthomonas oryzae pv. oryzae (strain MAFF 311018).